An 81-amino-acid chain; its full sequence is Antitoxin VapB28 (81 aa).

Its function is as follows. Antitoxin component of a type II toxin-antitoxin (TA) system. The sequence is that of Antitoxin VapB28 (vapB28) from Mycobacterium tuberculosis (strain CDC 1551 / Oshkosh).